The sequence spans 234 residues: Large ribosomal subunit protein uL1 (234 aa).

The protein belongs to the universal ribosomal protein uL1 family. Part of the 50S ribosomal subunit.

Binds directly to 23S rRNA. The L1 stalk is quite mobile in the ribosome, and is involved in E site tRNA release. Functionally, protein L1 is also a translational repressor protein, it controls the translation of the L11 operon by binding to its mRNA. The sequence is that of Large ribosomal subunit protein uL1 from Aliivibrio salmonicida (strain LFI1238) (Vibrio salmonicida (strain LFI1238)).